The primary structure comprises 747 residues: Protein TraI (747 aa).

Disordered regions lie at residues 510–594 (LNKE…PQSQ) and 624–652 (VEQQ…TPPG). Basic and acidic residues predominate over residues 513–526 (ENTHERTERPEHRG). A compositionally biased stretch (low complexity) spans 537 to 562 (QRPAADQHATGAAAVARAGDGRPAAG).

Functionally, the initiation process of transfer DNA synthesis requires the interaction of at least three plasmid-specific components (TraH, TraI, and TraJ) at the transfer origin resulting in the assembly of a specialized nucleoprotein complex - the relaxosome. Site and strand specific cleavage at the transfer origin is dependent on TraI and TraJ. The protein is Protein TraI (traI) of Escherichia coli.